Consider the following 873-residue polypeptide: Disks large homolog 1 (873 aa).

The L27 domain maps to 4–64 (RQKDAQRALQ…YYEVSLQDTE (61 aa)). Residues 62 to 135 (DTEDKPIEDS…SPHIPGDARP (74 aa)) are disordered. Over residues 63–77 (TEDKPIEDSSLKSRE) the composition is skewed to basic and acidic residues. The span at 85–96 (WNLSVPPSTTGP) shows a compositional bias: polar residues. PDZ domains are found at residues 230–317 (EITL…RRRK) and 325–412 (DVKL…AKPT). A compositionally biased stretch (polar residues) spans 441–456 (SYLSQPLTPATPSRYS). The segment at 441 to 464 (SYLSQPLTPATPSRYSPVSKGMLG) is disordered. Positions 474–555 (KIVLHRGTTG…TVTIIAQYRP (82 aa)) constitute a PDZ 3 domain. Positions 636 to 662 (NKDSGEQDTSDVDQHVTSNASDSESSF) are disordered. Residues 650 to 662 (HVTSNASDSESSF) are compositionally biased toward polar residues. Positions 683–858 (SRPVIILGPM…IYNQVKQIIE (176 aa)) constitute a Guanylate kinase-like domain.

It belongs to the MAGUK family.

It localises to the cell membrane. The protein localises to the endoplasmic reticulum membrane. Its subcellular location is the cell junction. The protein resides in the apical cell membrane. In terms of biological role, essential multidomain scaffolding protein required for normal development. Recruits channels, receptors and signaling molecules to discrete plasma membrane domains in polarized cells. Promotes epithelial cell layer barrier function via maintaining cell-cell adhesion. May play a role in adherens junction assembly, signal transduction and cell proliferation. May play a role in synapse assembly and function. The polypeptide is Disks large homolog 1 (dlg1) (Danio rerio (Zebrafish)).